A 142-amino-acid chain; its full sequence is Large ribosomal subunit protein uL13 (142 aa).

This sequence belongs to the universal ribosomal protein uL13 family. Part of the 50S ribosomal subunit.

In terms of biological role, this protein is one of the early assembly proteins of the 50S ribosomal subunit, although it is not seen to bind rRNA by itself. It is important during the early stages of 50S assembly. The polypeptide is Large ribosomal subunit protein uL13 (Bordetella bronchiseptica (strain ATCC BAA-588 / NCTC 13252 / RB50) (Alcaligenes bronchisepticus)).